We begin with the raw amino-acid sequence, 283 residues long: Demethylrebeccamycin-D-glucose O-methyltransferase (283 aa).

S-adenosyl-L-methionine contacts are provided by residues Ser-101, Gln-106, 129–130 (DA), Leu-146, and His-151.

This sequence belongs to the methyltransferase superfamily. Monomer.

It carries out the reaction 4'-demethylrebeccamycin + S-adenosyl-L-methionine = rebeccamycin + S-adenosyl-L-homocysteine + H(+). Functionally, glycosyl O-methyltransferase that catalyzes the final step in the biosynthesis of rebeccamycin, an indolocarbazole alkaloid that inhibits topoisomerase 1. Has broad substrate specificity and functions as glycosyl O-methyltransferase on a number of rebeccamycin analogs. The chain is Demethylrebeccamycin-D-glucose O-methyltransferase (rebM) from Lentzea aerocolonigenes (Lechevalieria aerocolonigenes).